We begin with the raw amino-acid sequence, 650 residues long: 1-deoxy-D-xylulose-5-phosphate synthase (650 aa).

Thiamine diphosphate-binding positions include His-73 and 113-115 (SHA). Residue Asp-145 participates in Mg(2+) binding. Thiamine diphosphate is bound by residues 146 to 147 (GA), Asn-175, Tyr-287, and Glu-369. Asn-175 is a binding site for Mg(2+). The disordered stretch occupies residues 629-650 (SARPLPEDAERVPMRAEDDEQA). Over residues 633-644 (LPEDAERVPMRA) the composition is skewed to basic and acidic residues.

It belongs to the transketolase family. DXPS subfamily. Homodimer. Mg(2+) serves as cofactor. Thiamine diphosphate is required as a cofactor.

The catalysed reaction is D-glyceraldehyde 3-phosphate + pyruvate + H(+) = 1-deoxy-D-xylulose 5-phosphate + CO2. Its pathway is metabolic intermediate biosynthesis; 1-deoxy-D-xylulose 5-phosphate biosynthesis; 1-deoxy-D-xylulose 5-phosphate from D-glyceraldehyde 3-phosphate and pyruvate: step 1/1. Functionally, catalyzes the acyloin condensation reaction between C atoms 2 and 3 of pyruvate and glyceraldehyde 3-phosphate to yield 1-deoxy-D-xylulose-5-phosphate (DXP). The sequence is that of 1-deoxy-D-xylulose-5-phosphate synthase from Clavibacter sepedonicus (Clavibacter michiganensis subsp. sepedonicus).